The following is a 313-amino-acid chain: tRNA pseudouridine synthase B (313 aa).

The active-site Nucleophile is aspartate 42.

This sequence belongs to the pseudouridine synthase TruB family. Type 1 subfamily.

It catalyses the reaction uridine(55) in tRNA = pseudouridine(55) in tRNA. In terms of biological role, responsible for synthesis of pseudouridine from uracil-55 in the psi GC loop of transfer RNAs. This Prochlorococcus marinus (strain SARG / CCMP1375 / SS120) protein is tRNA pseudouridine synthase B.